Here is a 161-residue protein sequence, read N- to C-terminus: Endoribonuclease YbeY (161 aa).

Residues His121, His125, and His131 each contribute to the Zn(2+) site.

The protein belongs to the endoribonuclease YbeY family. Zn(2+) is required as a cofactor.

It is found in the cytoplasm. In terms of biological role, single strand-specific metallo-endoribonuclease involved in late-stage 70S ribosome quality control and in maturation of the 3' terminus of the 16S rRNA. In Stenotrophomonas maltophilia (strain R551-3), this protein is Endoribonuclease YbeY.